We begin with the raw amino-acid sequence, 992 residues long: ATP-dependent 6-phosphofructokinase subunit alpha (992 aa).

Residues 1–558 (MNNSVYGVAF…LYSNFMSTTV (558 aa)) form an N-terminal catalytic PFK domain 1 region. ATP contacts are provided by residues glycine 193, 256 to 257 (RS), and 286 to 289 (GDGS). Aspartate 287 lines the Mg(2+) pocket. Beta-D-fructose 6-phosphate-binding positions include 332-334 (SID), arginine 369, 376-378 (MGR), glutamate 433, lysine 460, and 466-469 (HVQR). Residue aspartate 334 is the Proton acceptor of the active site. Residues 559 to 572 (NDDGSQLLPEADRL) are interdomain linker. The interval 573–992 (NIAIVHVGAP…AAKEDSALYV (420 aa)) is C-terminal regulatory PFK domain 2. Residues arginine 643, 700-704 (TVSNN), arginine 738, 745-747 (QGG), glutamate 805, arginine 831, 837-840 (HVQQ), and arginine 929 each bind beta-D-fructose 2,6-bisphosphate.

The protein belongs to the phosphofructokinase type A (PFKA) family. ATP-dependent PFK group I subfamily. Eukaryotic two domain clade 'E' sub-subfamily. Heterooctamer of 4 alpha and 4 beta chains. Mg(2+) serves as cofactor.

It is found in the cytoplasm. The catalysed reaction is beta-D-fructose 6-phosphate + ATP = beta-D-fructose 1,6-bisphosphate + ADP + H(+). Its pathway is carbohydrate degradation; glycolysis; D-glyceraldehyde 3-phosphate and glycerone phosphate from D-glucose: step 3/4. Its activity is regulated as follows. Allosterically activated by ADP, AMP, or fructose 2,6-bisphosphate, and allosterically inhibited by ATP or citrate. Its function is as follows. Catalyzes the phosphorylation of D-fructose 6-phosphate to fructose 1,6-bisphosphate by ATP, the first committing step of glycolysis. This chain is ATP-dependent 6-phosphofructokinase subunit alpha (PFK1), found in Kluyveromyces lactis (strain ATCC 8585 / CBS 2359 / DSM 70799 / NBRC 1267 / NRRL Y-1140 / WM37) (Yeast).